We begin with the raw amino-acid sequence, 255 residues long: Hydroxyacylglutathione hydrolase (255 aa).

7 residues coordinate Zn(2+): His-52, His-54, Asp-56, His-57, His-109, Asp-126, and His-166.

It belongs to the metallo-beta-lactamase superfamily. Glyoxalase II family. In terms of assembly, monomer. The cofactor is Zn(2+).

The enzyme catalyses an S-(2-hydroxyacyl)glutathione + H2O = a 2-hydroxy carboxylate + glutathione + H(+). Its pathway is secondary metabolite metabolism; methylglyoxal degradation; (R)-lactate from methylglyoxal: step 2/2. Its function is as follows. Thiolesterase that catalyzes the hydrolysis of S-D-lactoyl-glutathione to form glutathione and D-lactic acid. The protein is Hydroxyacylglutathione hydrolase of Anaeromyxobacter dehalogenans (strain 2CP-C).